The chain runs to 54 residues: Ovomucoid (54 aa).

The Kazal-like domain occupies 4-54 (VDCSDYPKPVCTLDYMPLCGSDNKTYSNKCNFCNAVVDSNGTITLSHFGRC). Cystine bridges form between Cys6-Cys36, Cys14-Cys33, and Cys22-Cys54. Asn43 is a glycosylation site (N-linked (GlcNAc...) asparagine).

Its subcellular location is the secreted. In Coloeus monedula (Eurasian jackdaw), this protein is Ovomucoid.